The following is a 707-amino-acid chain: Ribosome biogenesis protein ENP2 (707 aa).

WD repeat units lie at residues 54–94 (EFSE…LKFD), 178–217 (LDTE…RVSK), 226–265 (NRPF…PSII), 269–310 (GYGF…AYAS), and 312–351 (EPSV…PSPR). A disordered region spans residues 523–707 (LTAAEESDEE…RASKNAFRGM (185 aa)). Ser-529 carries the post-translational modification Phosphoserine. A compositionally biased stretch (basic and acidic residues) spans 532 to 544 (ERIAMKDGRGHYD). The segment covering 545–558 (YEDEESDEEESDDE) has biased composition (acidic residues). Ser-550 and Ser-555 each carry phosphoserine. Composition is skewed to basic and acidic residues over residues 559–598 (TNQK…RFMN), 629–647 (ENGK…RGEA), 659–671 (KDGN…HDNS), and 680–697 (NGNK…ENRR).

The protein belongs to the WD repeat NOL10/ENP2 family. In terms of assembly, component of the 90S pre-ribosomes.

Its subcellular location is the nucleus. It localises to the nucleolus. Functionally, may be involved in rRNA-processing and ribosome biosynthesis. The chain is Ribosome biogenesis protein ENP2 (ENP2) from Saccharomyces cerevisiae (strain ATCC 204508 / S288c) (Baker's yeast).